Here is an 823-residue protein sequence, read N- to C-terminus: Probable inorganic carbon transporter subunit DabA (823 aa).

Positions 361, 363, 527, and 542 each coordinate Zn(2+).

The protein belongs to the inorganic carbon transporter (TC 9.A.2) DabA family. In terms of assembly, forms a complex with DabB. Zn(2+) is required as a cofactor.

The protein resides in the cell inner membrane. Intracellular DIC accumulation is sensitive to CCCP (carbonyl cyanide-m-chlorophenylhydrazone) and DCCD (N,N-dicyclohexylcarbodiimide) and therefore likely driven by either proton potential, ATP, or both. In terms of biological role, part of an energy-coupled inorganic carbon pump. Its function is as follows. Probably involved in transport of dissolved inorganic carbon (DIC) with upstream gene dabB (Tcr_0853); has been suggested to be a proton-DIC symporter. This is Probable inorganic carbon transporter subunit DabA from Hydrogenovibrio crunogenus (strain DSM 25203 / XCL-2) (Thiomicrospira crunogena).